The chain runs to 173 residues: Transcriptional repressor NrdR (173 aa).

The segment at 3-34 (CPFCQHADTRVIDSRVSEDGATIRRRRECEAC) is a zinc-finger region. Residues 49-139 (PAIVKSDGTR…VYRSFEDVAD (91 aa)) form the ATP-cone domain.

Belongs to the NrdR family. The cofactor is Zn(2+).

Negatively regulates transcription of bacterial ribonucleotide reductase nrd genes and operons by binding to NrdR-boxes. In Stenotrophomonas maltophilia (strain R551-3), this protein is Transcriptional repressor NrdR.